Consider the following 385-residue polypeptide: NifS/IcsS protein homolog (385 aa).

Residues 69–70, Asn149, Gln178, and 199–201 contribute to the pyridoxal 5'-phosphate site; these read GT and SSH. Lys202 is subject to N6-(pyridoxal phosphate)lysine. A pyridoxal 5'-phosphate-binding site is contributed by Thr237. Cys325 functions as the Cysteine persulfide intermediate in the catalytic mechanism. Cys325 lines the [2Fe-2S] cluster pocket.

The protein belongs to the class-V pyridoxal-phosphate-dependent aminotransferase family. NifS/IscS subfamily. Pyridoxal 5'-phosphate is required as a cofactor.

This Lactobacillus delbrueckii subsp. bulgaricus (strain ATCC 11842 / DSM 20081 / BCRC 10696 / JCM 1002 / NBRC 13953 / NCIMB 11778 / NCTC 12712 / WDCM 00102 / Lb 14) protein is NifS/IcsS protein homolog.